The chain runs to 5068 residues: Protein piccolo (5068 aa).

A compositionally biased stretch (low complexity) spans 1-20; that stretch reads MGNEASLEGEGLPEGLAAAA. Disordered regions lie at residues 1-143 and 173-524; these read MGNE…DFKE and FDLI…QAPA. Residues 93 to 102 are compositionally biased toward pro residues; the sequence is PGKPPDPGRP. Basic and acidic residues-rich tracts occupy residues 111 to 122, 133 to 143, and 185 to 199; these read RTTDTFRSEQKL, KESKSRTDFKE, and ETTK…DQGK. S212 bears the Phosphoserine mark. Residues 232–241 show a composition bias toward polar residues; sequence PSKSVSSQQA. Low complexity predominate over residues 252–279; it reads AKPSQQSPAQTPAQQAKPVAQQPGPAKA. Polar residues predominate over residues 319–334; that stretch reads TSLQQPGPKSLAQTPG. Pro residues-rich tracts occupy residues 391–407 and 416–487; these read PTKP…PQPQ and PQQP…PQPQ. The tract at residues 401–500 is 10 X 10 AA tandem approximate repeats of P-A-K-P-Q-P-Q-Q-P-X; it reads PAKPQPQQPV…LGKPSAQQPS (100 aa). The span at 495-508 shows a compositional bias: polar residues; that stretch reads SAQQPSKSISQTVT. Over residues 515 to 524 the composition is skewed to low complexity; sequence PPTSAAQAPA. The C4-type zinc finger occupies 532–556; the sequence is CPLCNTTELLLHTPEKANFNTCTEC. Disordered stretches follow at residues 594 to 867, 883 to 1005, 1057 to 1345, and 1364 to 1803; these read AAIP…TVTG, LIST…TELN, LGDM…PSDL, and VGEK…SDPE. Polar residues predominate over residues 610 to 625; that stretch reads QPATASKSPVPSQQAS. Positions 626–644 are enriched in basic and acidic residues; the sequence is PKKELPSKQDSPKAPESKK. Low complexity predominate over residues 709–738; it reads SPSSAAATSKPAILSSQVQAQAQVTTAPPL. Basic and acidic residues predominate over residues 782–795; the sequence is ESKDPVQKKEEPKK. Residues 809-830 show a composition bias toward low complexity; the sequence is VPKGSPTPSGTRPTTGQATPQS. S844 and S856 each carry phosphoserine. Composition is skewed to polar residues over residues 856-865 and 883-893; these read SQPTTPQETV and LISTAGQQAPH. The residue at position 860 (T860) is a Phosphothreonine. The segment at 997–1020 adopts a C4-type zinc-finger fold; the sequence is CPLCRTELNVGSQDPPNFNTCTEC. The segment covering 1073–1085 has biased composition (pro residues); it reads SPVPAPAEPPPQK. The segment covering 1097-1116 has biased composition (basic and acidic residues); that stretch reads KETEVKAETEKQIPEKETPS. T1120 is subject to Phosphothreonine. Basic and acidic residues-rich tracts occupy residues 1144–1165, 1172–1186, 1244–1253, and 1262–1283; these read PEKK…KKPP, LEEK…KLPP, PKDRQKESRD, and TAKE…DKSD. Over residues 1290 to 1306 the composition is skewed to polar residues; the sequence is PKSPQGLSDTGYSSDGI. Phosphoserine occurs at positions 1292, 1302, 1303, 1332, 1334, 1337, 1338, and 1341. Residues 1319–1333 show a composition bias toward basic and acidic residues; it reads SDEKDLLKGLKKDSF. Residues 1334-1343 show a composition bias toward low complexity; that stretch reads SQESSPSSPS. The segment covering 1374–1392 has biased composition (polar residues); that stretch reads PQKVSPEQPQDQQKTQTPS. Basic and acidic residues predominate over residues 1405–1444; it reads KESQEKKVTSKKDSAQGFPSRKEHKENPELVDDLSPRRAS. A phosphoserine mark is found at S1439, S1451, S1452, S1454, S1457, S1481, S1484, S1505, and S1507. The span at 1499 to 1511 shows a compositional bias: acidic residues; that stretch reads SADEDASGSEDEE. Position 1552 is a phosphothreonine (T1552). Phosphoserine is present on residues S1553, S1563, and S1575. Positions 1566–1575 are enriched in acidic residues; sequence DEDDETFDES. Positions 1576–1587 are enriched in basic and acidic residues; sequence PELKFRETKSQE. Positions 1606-1624 are enriched in polar residues; that stretch reads ELNSTVTDKYSAESSQKKT. The span at 1628-1638 shows a compositional bias: acidic residues; the sequence is FDEEPELEMES. S1638 carries the post-translational modification Phosphoserine. T1640 bears the Phosphothreonine mark. Phosphoserine is present on residues S1642 and S1647. Residues 1650-1667 are compositionally biased toward polar residues; sequence EGSSSLHASSFTPGTSPT. Positions 1707 to 1720 are enriched in acidic residues; it reads DSSEEEELREEEEL. A phosphoserine mark is found at S1708 and S1709. Over residues 1721 to 1734 the composition is skewed to basic and acidic residues; sequence LKEQEKQRELEQQQ. Residue T1760 is modified to Phosphothreonine. S1766 carries the phosphoserine modification. Over residues 1775–1790 the composition is skewed to basic and acidic residues; that stretch reads EELRQAAEMEELHRSS. Phosphoserine is present on residues S1795, S1800, S1808, and S1829. 2 disordered regions span residues 2104-2126 and 2261-2377; these read PSES…ISSV and EAEL…AAAA. Residues 2109 to 2126 are compositionally biased toward low complexity; sequence TSVPPSDTPSLTSSISSV. Positions 2277–2291 are enriched in polar residues; it reads TPSSQTKEQPGSPHS. Positions 2334–2368 are enriched in pro residues; the sequence is QPPPPPPPPPPPPPPPPPPPPPPLPPATSPKPPTY. S2495 bears the Phosphoserine mark. O-linked (GlcNAc) threonine glycosylation occurs at T2686. S2960 is a glycosylation site (O-linked (GlcNAc) serine). Phosphothreonine is present on T2998. Disordered regions lie at residues 3334–3443 and 3490–3556; these read KEEK…SKVS and KGGS…LYSP. S3358 carries the post-translational modification Phosphoserine. Over residues 3361–3370 the composition is skewed to basic and acidic residues; it reads DDPRNLKKIV. A Phosphoserine modification is found at S3372. A phosphothreonine mark is found at T3376 and T3403. Residues 3403–3412 show a composition bias toward acidic residues; that stretch reads TDDEDQDEWD. Residues 3495 to 3507 show a composition bias toward polar residues; sequence GCQTETDPDTQSP. Phosphoserine occurs at positions 3506, 3514, 3545, 3549, 3555, 3558, 3561, 3582, 3608, 3610, and 3616. 2 disordered regions span residues 3576-3679 and 3760-3797; these read PLPD…RRRM and DYMS…QFIP. Composition is skewed to polar residues over residues 3636 to 3645 and 3661 to 3673; these read KGSQTTSGTQ and STGT…TMGT. S3763 carries the post-translational modification Phosphoserine. The segment covering 3773 to 3785 has biased composition (basic and acidic residues); the sequence is SRVESQHGIERPR. The segment covering 3787–3797 has biased composition (polar residues); the sequence is APQTEFSQFIP. S4016, S4042, and S4132 each carry phosphoserine. 2 disordered regions span residues 4207–4231 and 4254–4273; these read ADKP…GLDL and VSFG…LPIS. The span at 4210–4231 shows a compositional bias: low complexity; the sequence is PYSSGSRSRPSSRPSSVYGLDL. A compositionally biased stretch (polar residues) spans 4257–4273; it reads GHSSSSARTKPTSLPIS. A phosphoserine mark is found at S4286, S4290, S4293, S4322, and S4358. Residues 4317 to 4339 form a disordered region; sequence RDQFGSSHSLPEVQQHMREESRT. The PDZ domain occupies 4424-4518; sequence RIKITRDSKD…EAEICVRLDL (95 aa). The segment at 4574–4620 is disordered; it reads KGAHAHSGPTSAGSSSVPSPGQPGSPSVSKKKHGGSKPTDVSKTASH. Residues 4578–4601 show a composition bias toward low complexity; it reads AHSGPTSAGSSSVPSPGQPGSPSV. Position 4592 is a phosphoserine (S4592). The C2 1 domain occupies 4622–4751; it reads ITGEIQLQIN…SHLDNTPRWY (130 aa). Residues D4651 and D4657 each coordinate Ca(2+). Position 4706 is a phosphoserine (S4706). The Ca(2+) site is built by D4721, D4723, S4726, and D4729. 2 disordered regions span residues 4758 to 4834 and 4857 to 4891; these read ESIE…SVAQ and QPTK…SEGS. Low complexity-rich tracts occupy residues 4766-4778 and 4805-4815; these read HSSQ…PKPS and SSPGSSKSSSE. The segment covering 4823–4834 has biased composition (polar residues); that stretch reads PSRSQSKTSVAQ. Positions 4870 to 4891 are enriched in low complexity; sequence SVSTGSSGSSVGSGYSVDSEGS. A C2 2 domain is found at 4933–5058; sequence VMGEIKLALK…DLRKRIVNWH (126 aa).

In terms of assembly, interacts with BSN, ERC2/CAST1, RIMS1 and UNC13A. Interacts (via C-terminus) with TRIO (via N-terminus). Interacts with CTBP1. Interacts with SIAH1; this interaction negatively regulates SIAH1 E3 ligase activity. Directly interacts with GIT1 and GIT2. The cofactor is Ca(2+). In terms of tissue distribution, highly expressed in brain. Moderately expressed in pituitary gland and pancreatic islets. Low levels found in stomach.

The protein resides in the presynaptic active zone. Functionally, scaffold protein of the presynaptic cytomatrix at the active zone (CAZ) which is the place in the synapse where neurotransmitter is released. After synthesis, participates in the formation of Golgi-derived membranous organelles termed Piccolo-Bassoon transport vesicles (PTVs) that are transported along axons to sites of nascent synaptic contacts. At the presynaptic active zone, regulates the spatial organization of synaptic vesicle cluster, the protein complexes that execute membrane fusion and compensatory endocytosis. Organizes as well the readily releasable pool of synaptic vesicles and safeguards a fraction of them to be not immediately available for action potential-induced release. Also functions in processes other than assembly such as the regulation of specific presynaptic protein ubiquitination by interacting with SIAH1 or the regulation of presynaptic autophagy. Also mediates synapse to nucleus communication leading to reconfiguration of gene expression by associating with the transcriptional corepressor CTBP1 and by subsequently reducing the size of its pool available for nuclear import. The sequence is that of Protein piccolo from Mus musculus (Mouse).